The following is a 560-amino-acid chain: Chaperonin GroEL 2 (560 aa).

ATP contacts are provided by residues 29 to 32 (TLGP), Lys-50, 86 to 90 (DGTTT), Gly-414, and Asp-494. Residues 524–546 (EDEDDDDGGGGGGGGMPAGGAGG) form a disordered region. The span at 532–546 (GGGGGGGMPAGGAGG) shows a compositional bias: gly residues.

Belongs to the chaperonin (HSP60) family. In terms of assembly, forms a cylinder of 14 subunits composed of two heptameric rings stacked back-to-back. Interacts with the co-chaperonin GroES.

It is found in the cytoplasm. The catalysed reaction is ATP + H2O + a folded polypeptide = ADP + phosphate + an unfolded polypeptide.. In terms of biological role, together with its co-chaperonin GroES, plays an essential role in assisting protein folding. The GroEL-GroES system forms a nano-cage that allows encapsulation of the non-native substrate proteins and provides a physical environment optimized to promote and accelerate protein folding. This is Chaperonin GroEL 2 from Salinibacter ruber (strain DSM 13855 / M31).